Reading from the N-terminus, the 136-residue chain is Snaclec rhodocytin subunit alpha (136 aa).

Cystine bridges form between Cys-5–Cys-16, Cys-33–Cys-131, and Cys-106–Cys-123. One can recognise a C-type lectin domain in the interval 12-132 (YDQHCYQAFN…CEQMHAFVCK (121 aa)).

It belongs to the snaclec family. As to quaternary structure, dimer (non-covalently linked) of heterodimers of subunits alpha and beta (disulfide-linked). As to expression, expressed by the venom gland.

It is found in the secreted. Functionally, elicits platelet aggregation by the binding to the C-type lectin domain family 1 member B (CLEC1B/CLEC2). Binding leads to tyrosine phosphorylation in the cytoplasmic tail of CLEC1B, which promotes the binding of spleen tyrosine kinase (Syk), subsequent activation of PLC-gamma-2, and platelet activation and aggregation. Binding to GPIbalpha (GP1BA) and alpha-2/beta-1 (ITGA2/ITGB1) may also induce aggregation, but this is controversial. The sequence is that of Snaclec rhodocytin subunit alpha from Calloselasma rhodostoma (Malayan pit viper).